Consider the following 219-residue polypeptide: Polysialic acid transport ATP-binding protein KpsT (219 aa).

Residues isoleucine 2 to aspartate 218 enclose the ABC transporter domain. ATP is bound at residue glycine 38 to serine 45.

It belongs to the ABC transporter superfamily.

It localises to the cell inner membrane. Putative ATP-binding protein, and an energy coupling component for the transport of polysialic acid across the cytoplasmic membrane. The polypeptide is Polysialic acid transport ATP-binding protein KpsT (kpsT) (Escherichia coli).